Here is a 152-residue protein sequence, read N- to C-terminus: Keratin, high-sulfur matrix protein, B2C (152 aa).

Alanine 2 is modified (N-acetylalanine). 3 consecutive repeats follow at residues 27 to 36 (STCSQTSCCQ), 37 to 46 (PTSIQTSCCQ), and 47 to 56 (PTCLQTSGCE).

The keratin products of mammalian epidermal derivatives such as wool and hair consist of microfibrils embedded in a rigid matrix of other proteins. The matrix proteins include the high-sulfur and high-tyrosine keratins, having molecular weights of 6-20 kDa, whereas the microfibrils contain the larger, low-sulfur keratins (40-56 kDa). The chain is Keratin, high-sulfur matrix protein, B2C from Ovis aries (Sheep).